Here is a 146-residue protein sequence, read N- to C-terminus: MKIYVDADACPVKDVIIFEATKAKIPVTLVTSFSHYSNAEQPKSVETIYVDSGADAADYRIMQLAQKEDLIVTQDYGLASLALAKGCIVLHHKGYKYTNDNIEQLLQTRYLSAMVRKSGKRTKGPKPFTAEDKEKFRALFKSMIAL.

This sequence belongs to the UPF0178 family.

The protein is UPF0178 protein BCA_3127 of Bacillus cereus (strain 03BB102).